Reading from the N-terminus, the 53-residue chain is Large ribosomal subunit protein bL33A (53 aa).

This sequence belongs to the bacterial ribosomal protein bL33 family.

The polypeptide is Large ribosomal subunit protein bL33A (rpmG1) (Mycoplasma pneumoniae (strain ATCC 29342 / M129 / Subtype 1) (Mycoplasmoides pneumoniae)).